A 147-amino-acid chain; its full sequence is Hemoglobin subunit beta (147 aa).

The region spanning Glu-3 to His-147 is the Globin domain. Heme b is bound by residues His-64 and His-93.

The protein belongs to the globin family. Heterotetramer of two alpha chains and two beta chains. Red blood cells.

Involved in oxygen transport from gills to the various peripheral tissues. The sequence is that of Hemoglobin subunit beta (hbb) from Gadus morhua (Atlantic cod).